A 286-amino-acid polypeptide reads, in one-letter code: Phycobilisome 31.8 kDa linker polypeptide, phycoerythrin-associated, rod (286 aa).

Residues 2–179 (PFGPASRLGV…LVRGASSSSL (178 aa)) enclose the PBS-linker domain. In terms of domain architecture, CpcD-like spans 231–286 (GKVYRIEVTGYRAKTFNNISKFRRSNQVFLVPYEKLSQEYQRIHQQGGVIASITPV).

The protein belongs to the phycobilisome linker protein family. As to quaternary structure, the phycobilisome is a hemidiscoidal structure that is composed of two distinct substructures: a core complex and six rods radiating from the core.

The protein localises to the cellular thylakoid membrane. Functionally, rod linker protein, associated with phycoerythrocyanin. Linker polypeptides determine the state of aggregation and the location of the disk-shaped phycobiliprotein units within the phycobilisome and modulate their spectroscopic properties in order to mediate a directed and optimal energy transfer. The chain is Phycobilisome 31.8 kDa linker polypeptide, phycoerythrin-associated, rod (cpeC) from Microchaete diplosiphon (Fremyella diplosiphon).